A 230-amino-acid polypeptide reads, in one-letter code: Cytidylate kinase (230 aa).

10–18 provides a ligand contact to ATP; it reads GFSSTGKST.

It belongs to the cytidylate kinase family. Type 1 subfamily.

It localises to the cytoplasm. The enzyme catalyses CMP + ATP = CDP + ADP. It catalyses the reaction dCMP + ATP = dCDP + ADP. This Flavobacterium johnsoniae (strain ATCC 17061 / DSM 2064 / JCM 8514 / BCRC 14874 / CCUG 350202 / NBRC 14942 / NCIMB 11054 / UW101) (Cytophaga johnsonae) protein is Cytidylate kinase.